A 99-amino-acid chain; its full sequence is Large ribosomal subunit protein bL21 (99 aa).

It belongs to the bacterial ribosomal protein bL21 family. Part of the 50S ribosomal subunit. Contacts protein L20.

Functionally, this protein binds to 23S rRNA in the presence of protein L20. This is Large ribosomal subunit protein bL21 from Mycoplasma mobile (strain ATCC 43663 / 163K / NCTC 11711) (Mesomycoplasma mobile).